The primary structure comprises 277 residues: Carbonyl reductase [NADPH] 3 (277 aa).

An N-acetylserine modification is found at S2. NADP(+) contacts are provided by residues 10–34, 38–42, 63–64, and N90; these read VTGA…GDVV, RDEAR, and DI. S30 is modified (phosphoserine). Position 140 (S140) interacts with substrate. The active-site Proton acceptor is the Y194. Residue 194–198 participates in NADP(+) binding; it reads YGVSK.

This sequence belongs to the short-chain dehydrogenases/reductases (SDR) family.

Its subcellular location is the cytoplasm. The catalysed reaction is a secondary alcohol + NADP(+) = a ketone + NADPH + H(+). It catalyses the reaction a quinone + NADPH + H(+) = a quinol + NADP(+). Functionally, catalyzes the NADPH-dependent reduction of carbonyl compounds to their corresponding alcohols. Has low NADPH-dependent oxidoreductase activity. Acts on several orthoquinones, as well as on non-quinone compounds, such as isatin or on the anticancer drug oracin. Best substrates for CBR3 is 1,2- naphthoquinone, hence could play a role in protection against cytotoxicity of exogenous quinones. Exerts activity toward ortho-quinones but not paraquinones. No endogenous substrate for CBR3 except isatin has been identified. The protein is Carbonyl reductase [NADPH] 3 (Cbr3) of Mus musculus (Mouse).